The primary structure comprises 445 residues: 3-phosphoshikimate 1-carboxyvinyltransferase (445 aa).

3-phosphoshikimate contacts are provided by K25, S26, and R30. K25 contacts phosphoenolpyruvate. G98 and R126 together coordinate phosphoenolpyruvate. Residues S171, Q173, D324, and K351 each coordinate 3-phosphoshikimate. Position 173 (Q173) interacts with phosphoenolpyruvate. Residue D324 is the Proton acceptor of the active site. Positions 355 and 398 each coordinate phosphoenolpyruvate.

This sequence belongs to the EPSP synthase family. In terms of assembly, monomer.

Its subcellular location is the cytoplasm. It catalyses the reaction 3-phosphoshikimate + phosphoenolpyruvate = 5-O-(1-carboxyvinyl)-3-phosphoshikimate + phosphate. It functions in the pathway metabolic intermediate biosynthesis; chorismate biosynthesis; chorismate from D-erythrose 4-phosphate and phosphoenolpyruvate: step 6/7. Functionally, catalyzes the transfer of the enolpyruvyl moiety of phosphoenolpyruvate (PEP) to the 5-hydroxyl of shikimate-3-phosphate (S3P) to produce enolpyruvyl shikimate-3-phosphate and inorganic phosphate. This Hydrogenovibrio crunogenus (strain DSM 25203 / XCL-2) (Thiomicrospira crunogena) protein is 3-phosphoshikimate 1-carboxyvinyltransferase.